A 247-amino-acid polypeptide reads, in one-letter code: Small ribosomal subunit protein uS2 (247 aa).

Belongs to the universal ribosomal protein uS2 family.

In Pseudomonas savastanoi pv. phaseolicola (strain 1448A / Race 6) (Pseudomonas syringae pv. phaseolicola (strain 1448A / Race 6)), this protein is Small ribosomal subunit protein uS2.